Consider the following 336-residue polypeptide: Probable allantoicase 2 (336 aa).

This sequence belongs to the allantoicase family.

It catalyses the reaction allantoate + H2O = (S)-ureidoglycolate + urea. Its pathway is nitrogen metabolism; (S)-allantoin degradation; (S)-ureidoglycolate from allantoate (aminidohydrolase route): step 1/1. In Burkholderia mallei (strain ATCC 23344), this protein is Probable allantoicase 2.